The chain runs to 236 residues: MSFLKSFPPPGSADGLRLQQPDTEAVLNGKGLGTGTLYIAESRLSWLDGSGLGFSLEYPTISLHAVSRDPNAYPQEHLYVMVNARFGEESKEPFSDEDEDDNDDVEPISEFRFVPSDKSALEAMFTAMCECQALHPDPEDEDSDDYDGEEYDVEAHEQGQGDIPTFYTYEEGLSHLTAEGQATLERLEGMLSQSVSSQYNMAGVRTEDSVRTYEDGMEVETTPTVAGQFEDADVDH.

Ser-2 is modified (N-acetylserine). Residues Ser-95, Ser-143, Ser-192, Ser-194, Ser-197, and Ser-209 each carry the phosphoserine modification. A disordered region spans residues 134 to 158 (LHPDPEDEDSDDYDGEEYDVEAHEQ). Over residues 138–152 (PEDEDSDDYDGEEYD) the composition is skewed to acidic residues. Thr-222 carries the phosphothreonine modification.

This sequence belongs to the pICln (TC 1.A.47) family. In terms of assembly, component of the methylosome, a 20S complex containing at least PRMT5/SKB1, WDR77/MEP50 and CLNS1A/pICln. May mediate SNRPD1 and SNRPD3 methylation. Forms a 6S pICln-Sm complex composed of CLNS1A/pICln, SNRPD1, SNRPD2, SNRPE, SNRPF and SNRPG; ring-like structure where CLNS1A/pICln mimics additional Sm proteins and which is unable to assemble into the core snRNP. Interacts with LSM10 and LSM11. In terms of tissue distribution, expressed in most tissues.

The protein resides in the cytoplasm. It is found in the cytosol. The protein localises to the nucleus. It localises to the cytoskeleton. Its function is as follows. Involved in both the assembly of spliceosomal snRNPs and the methylation of Sm proteins. Chaperone that regulates the assembly of spliceosomal U1, U2, U4 and U5 small nuclear ribonucleoproteins (snRNPs), the building blocks of the spliceosome, and thereby plays an important role in the splicing of cellular pre-mRNAs. Most spliceosomal snRNPs contain a common set of Sm proteins SNRPB, SNRPD1, SNRPD2, SNRPD3, SNRPE, SNRPF and SNRPG that assemble in a heptameric protein ring on the Sm site of the small nuclear RNA to form the core snRNP (Sm core). In the cytosol, the Sm proteins SNRPD1, SNRPD2, SNRPE, SNRPF and SNRPG are trapped in an inactive 6S pICln-Sm complex by the chaperone CLNS1A that controls the assembly of the core snRNP. Dissociation by the SMN complex of CLNS1A from the trapped Sm proteins and their transfer to an SMN-Sm complex triggers the assembly of core snRNPs and their transport to the nucleus. The polypeptide is Methylosome subunit pICln (Clns1a) (Rattus norvegicus (Rat)).